The primary structure comprises 366 residues: Septin-1 (366 aa).

In terms of domain architecture, Septin-type G spans 22–295 (KGFDFTLMVA…EGYRARCLQS (274 aa)). The interval 32–39 (GESGLGKS) is G1 motif. GTP contacts are provided by residues 32 to 39 (GESGLGKS), Thr66, Gly92, and 171 to 179 (KADALMPRE). The segment at 89-92 (DTPG) is G3 motif. Residues 170 to 173 (GKAD) are G4 motif. Phosphoserine is present on Ser206. Gly229 and Arg244 together coordinate GTP. Phosphoserine is present on Ser247. At Thr250 the chain carries Phosphothreonine. Phosphoserine; by AURKB is present on residues Ser306 and Ser314. The segment at 347 to 366 (EKMQAQMQQSQAQGEQSDVL) is disordered. Residues 349–366 (MQAQMQQSQAQGEQSDVL) are compositionally biased toward low complexity.

Belongs to the TRAFAC class TrmE-Era-EngA-EngB-Septin-like GTPase superfamily. Septin GTPase family. In terms of assembly, septins polymerize into heterooligomeric protein complexes that form filaments, and can associate with cellular membranes, actin filaments and microtubules. GTPase activity is required for filament formation. Interacts with AURKB.

Its subcellular location is the cytoplasm. The protein resides in the cytoskeleton. It localises to the microtubule organizing center. The protein localises to the centrosome. It is found in the midbody. Filament-forming cytoskeletal GTPase. May play a role in cytokinesis (Potential). In Mus musculus (Mouse), this protein is Septin-1.